The sequence spans 338 residues: Glycerol-3-phosphate dehydrogenase [NAD(P)+] (338 aa).

NADPH is bound by residues S14, Y15, H35, and K109. Sn-glycerol 3-phosphate-binding residues include K109, G138, and T140. Residue A142 coordinates NADPH. Sn-glycerol 3-phosphate-binding residues include K194, D247, S257, R258, and N259. Residue K194 is the Proton acceptor of the active site. Residue R258 coordinates NADPH. NADPH-binding residues include V282 and E284.

This sequence belongs to the NAD-dependent glycerol-3-phosphate dehydrogenase family.

The protein resides in the cytoplasm. It carries out the reaction sn-glycerol 3-phosphate + NAD(+) = dihydroxyacetone phosphate + NADH + H(+). It catalyses the reaction sn-glycerol 3-phosphate + NADP(+) = dihydroxyacetone phosphate + NADPH + H(+). The protein operates within membrane lipid metabolism; glycerophospholipid metabolism. Functionally, catalyzes the reduction of the glycolytic intermediate dihydroxyacetone phosphate (DHAP) to sn-glycerol 3-phosphate (G3P), the key precursor for phospholipid synthesis. This chain is Glycerol-3-phosphate dehydrogenase [NAD(P)+], found in Shewanella oneidensis (strain ATCC 700550 / JCM 31522 / CIP 106686 / LMG 19005 / NCIMB 14063 / MR-1).